A 237-amino-acid chain; its full sequence is Methylosome subunit pICln (237 aa).

Serine 2 is subject to N-acetylserine. Phosphoserine is present on residues serine 102, serine 144, serine 193, and serine 195. Position 223 is a phosphothreonine (threonine 223).

Belongs to the pICln (TC 1.A.47) family. Component of the methylosome, a 20S complex containing at least PRMT5/SKB1, WDR77/MEP50 and CLNS1A/pICln. May mediate SNRPD1 and SNRPD3 methylation. Forms a 6S pICln-Sm complex composed of CLNS1A/pICln, SNRPD1, SNRPD2, SNRPE, SNRPF and SNRPG; ring-like structure where CLNS1A/pICln mimics additional Sm proteins and which is unable to assemble into the core snRNP. Interacts with LSM10 and LSM11.

The protein localises to the cytoplasm. Its subcellular location is the cytosol. It is found in the nucleus. It localises to the cytoskeleton. Its function is as follows. Involved in both the assembly of spliceosomal snRNPs and the methylation of Sm proteins. Chaperone that regulates the assembly of spliceosomal U1, U2, U4 and U5 small nuclear ribonucleoproteins (snRNPs), the building blocks of the spliceosome, and thereby plays an important role in the splicing of cellular pre-mRNAs. Most spliceosomal snRNPs contain a common set of Sm proteins SNRPB, SNRPD1, SNRPD2, SNRPD3, SNRPE, SNRPF and SNRPG that assemble in a heptameric protein ring on the Sm site of the small nuclear RNA to form the core snRNP (Sm core). In the cytosol, the Sm proteins SNRPD1, SNRPD2, SNRPE, SNRPF and SNRPG are trapped in an inactive 6S pICln-Sm complex by the chaperone CLNS1A that controls the assembly of the core snRNP. Dissociation by the SMN complex of CLNS1A from the trapped Sm proteins and their transfer to an SMN-Sm complex triggers the assembly of core snRNPs and their transport to the nucleus. This Pongo abelii (Sumatran orangutan) protein is Methylosome subunit pICln (CLNS1A).